The sequence spans 348 residues: Replication-associated protein (348 aa).

Positions 1 to 17 are enriched in low complexity; the sequence is MRAPASSAASNRPGPSN. Residues 1 to 22 form a disordered region; it reads MRAPASSAASNRPGPSNHPTPR. The CRESS-DNA virus Rep endonuclease domain occupies 22-125; it reads RWNSKQFFLT…NGDSDEMGEL (104 aa). The RCR-1 signature appears at 29-32; sequence FLTY. The a divalent metal cation site is built by Glu63, His71, and His73. An RCR-2 motif is present at residues 71 to 73; sequence HLH. Tyr111 functions as the For DNA cleavage activity in the catalytic mechanism. An RCR-3 motif is present at residues 111 to 114; the sequence is YISK. Residues 176 to 188 form an oligomerization region; sequence SAAALFTEPPPVY. 228–235 provides a ligand contact to ATP; it reads GPSRTGKT. The tract at residues 251-269 is transactivation; the sequence is VDFTHYDKDAIYNVIDDVP. The Nuclear localization signal signature appears at 291 to 301; that stretch reads KYGKKKKIPGG.

This sequence belongs to the geminiviridae Rep protein family. In terms of assembly, homooligomer. Rep binds to repeated DNA motifs (iterons). Forms the O-complex, which is a Rep-DNA complex involved in the initiation of RCR. Part of the C- and V-complexes which are RepA-Rep-DNA complexes involved in the c-sense and v-sense transcription. Requires Mg(2+) as cofactor. Mn(2+) serves as cofactor.

The protein resides in the host nucleus. Essential for the replication of viral ssDNA. The closed circular ssDNA genome is first converted to a superhelical dsDNA. Rep binds a specific region at the genome origin of replication. It introduces an endonucleolytic nick within the conserved sequence 5'-TAATATTAC-3' in the intergenic region of the genome present in all geminiviruses, thereby initiating the rolling circle replication (RCR). Following cleavage, binds covalently to the 5'-phosphate of DNA as a tyrosyl ester. The cleavage gives rise to a free 3'-OH that serves as a primer for the cellular DNA polymerase. The polymerase synthesizes the (+) strand DNA by rolling circle mechanism. After one round of replication, a Rep-catalyzed nucleotidyl transfer reaction releases a circular single-stranded virus genome, thereby terminating the replication. Displays origin-specific DNA cleavage, nucleotidyl transferase, ATPase and helicase activities. Acts as an inhibitor of C-sense gene transcription. This Miscanthus streak virus (isolate 91) (MiSV) protein is Replication-associated protein.